We begin with the raw amino-acid sequence, 281 residues long: MIENRPWLTIFSHTMLILGIAVILFPLYVAFVAATLDKQAVYAAPMTLIPGTHLLENIHNIWVNGVGTNSAPFWRMLLNSFVMAFSITLGKITVSMLSAFAIVWFRFPLRNLFFWMIFITLMLPVEVRIFPTVEVIANLKMLDSYAGLTLPLMASATATFLFRQFFMILPDELVEAARIDGASPMRFFCDIVFPLSKTNLAALFVITFIYGWNQYLWPLLIITDVDLGTTVAGIKGMIATGEGTTEWNSVMAAMLLTLIPPVVIVLVMQRAFVRGLVDSEK.

The next 6 membrane-spanning stretches (helical) occupy residues Leu16–Leu36, Phe85–Phe105, Phe113–Val133, Leu142–Phe162, Ala202–Ile222, and Trp247–Val267. In terms of domain architecture, ABC transmembrane type-1 spans Leu77–Met268.

This sequence belongs to the binding-protein-dependent transport system permease family. UgpAE subfamily. The complex is composed of two ATP-binding proteins (UgpC), two transmembrane proteins (UgpA and UgpE) and a solute-binding protein (UgpB).

The protein localises to the cell inner membrane. Its function is as follows. Part of the ABC transporter complex UgpBAEC involved in sn-glycerol-3-phosphate (G3P) import. Probably responsible for the translocation of the substrate across the membrane. In Shigella dysenteriae serotype 1 (strain Sd197), this protein is sn-glycerol-3-phosphate transport system permease protein UgpE (ugpE).